We begin with the raw amino-acid sequence, 346 residues long: Peroxidase 19 (346 aa).

A signal peptide spans 1–31 (MHVISLSLSSIFFFLFLTSTILISPVQPTTS). 4 disulfides stabilise this stretch: C51–C134, C84–C89, C140–C342, and C219–C251. H82 functions as the Proton acceptor in the catalytic mechanism. Ca(2+) contacts are provided by D83, V86, G88, D90, and S92. P182 provides a ligand contact to substrate. N185 carries N-linked (GlcNAc...) asparagine glycosylation. A heme b-binding site is contributed by H212. Residue T213 coordinates Ca(2+). Ca(2+) contacts are provided by D265, T268, and D273.

This sequence belongs to the peroxidase family. Classical plant (class III) peroxidase subfamily. The cofactor is heme b. It depends on Ca(2+) as a cofactor.

Its subcellular location is the secreted. The catalysed reaction is 2 a phenolic donor + H2O2 = 2 a phenolic radical donor + 2 H2O. Removal of H(2)O(2), oxidation of toxic reductants, biosynthesis and degradation of lignin, suberization, auxin catabolism, response to environmental stresses such as wounding, pathogen attack and oxidative stress. These functions might be dependent on each isozyme/isoform in each plant tissue. In Arabidopsis thaliana (Mouse-ear cress), this protein is Peroxidase 19 (PER19).